The following is a 510-amino-acid chain: GMP synthase [glutamine-hydrolyzing] (510 aa).

A Glutamine amidotransferase type-1 domain is found at 5–195; sequence LVLVVDFGGQ…LFNVCNLKGD (191 aa). Cys82 acts as the Nucleophile in catalysis. Catalysis depends on residues His169 and Glu171. A GMPS ATP-PPase domain is found at 196–385; it reads WSMSSFAEQQ…LGIPHKLVWR (190 aa). Residue 223 to 229 coordinates ATP; that stretch reads SGGVDSS.

As to quaternary structure, homodimer.

The catalysed reaction is XMP + L-glutamine + ATP + H2O = GMP + L-glutamate + AMP + diphosphate + 2 H(+). It participates in purine metabolism; GMP biosynthesis; GMP from XMP (L-Gln route): step 1/1. Functionally, catalyzes the synthesis of GMP from XMP. This Clostridium botulinum (strain Kyoto / Type A2) protein is GMP synthase [glutamine-hydrolyzing].